A 352-amino-acid polypeptide reads, in one-letter code: Phosphoribosylformylglycinamidine cyclo-ligase (352 aa).

This sequence belongs to the AIR synthase family.

It is found in the cytoplasm. The enzyme catalyses 2-formamido-N(1)-(5-O-phospho-beta-D-ribosyl)acetamidine + ATP = 5-amino-1-(5-phospho-beta-D-ribosyl)imidazole + ADP + phosphate + H(+). It functions in the pathway purine metabolism; IMP biosynthesis via de novo pathway; 5-amino-1-(5-phospho-D-ribosyl)imidazole from N(2)-formyl-N(1)-(5-phospho-D-ribosyl)glycinamide: step 2/2. This is Phosphoribosylformylglycinamidine cyclo-ligase from Stenotrophomonas maltophilia (strain R551-3).